Reading from the N-terminus, the 298-residue chain is MKDFFRRAPLPFTSSRREQQIPDNVWAKCANCGELTYQKQFNDALKVCPKCSYHSRISSREWIEVLADADSFVEYDADLQGIDILGFVSPKDNYEAKLAATSERTGTNDVVMSGSASIEGLPFEIAACNFEFMGGSMGSVFGEKVARAVERAADRGVPVLTINASGGARMHEGIFALMQMAKVSVALTRLARVRQPHISLLVDPCYGGVSASYASVADIILAEPGANIGFAGRRVIEQTIRQKLPPNFQTAEFFLEHGMIDAVVPRSDMRATIGRLLRLYQRPTSSADHREHVVAGHQ.

The CoA carboxyltransferase N-terminal domain maps to 25-295; it reads VWAKCANCGE…SADHREHVVA (271 aa). C29, C32, C48, and C51 together coordinate Zn(2+). Residues 29 to 51 form a C4-type zinc finger; that stretch reads CANCGELTYQKQFNDALKVCPKC.

It belongs to the AccD/PCCB family. Acetyl-CoA carboxylase is a heterohexamer composed of biotin carboxyl carrier protein (AccB), biotin carboxylase (AccC) and two subunits each of ACCase subunit alpha (AccA) and ACCase subunit beta (AccD). It depends on Zn(2+) as a cofactor.

Its subcellular location is the cytoplasm. It catalyses the reaction N(6)-carboxybiotinyl-L-lysyl-[protein] + acetyl-CoA = N(6)-biotinyl-L-lysyl-[protein] + malonyl-CoA. It functions in the pathway lipid metabolism; malonyl-CoA biosynthesis; malonyl-CoA from acetyl-CoA: step 1/1. In terms of biological role, component of the acetyl coenzyme A carboxylase (ACC) complex. Biotin carboxylase (BC) catalyzes the carboxylation of biotin on its carrier protein (BCCP) and then the CO(2) group is transferred by the transcarboxylase to acetyl-CoA to form malonyl-CoA. The sequence is that of Acetyl-coenzyme A carboxylase carboxyl transferase subunit beta from Herpetosiphon aurantiacus (strain ATCC 23779 / DSM 785 / 114-95).